A 188-amino-acid chain; its full sequence is Elongation factor P (188 aa).

The residue at position 34 (lysine 34) is an N6-(3,6-diaminohexanoyl)-5-hydroxylysine.

Belongs to the elongation factor P family. May be beta-lysylated on the epsilon-amino group of Lys-34 by the combined action of EpmA and EpmB, and then hydroxylated on the C5 position of the same residue by EpmC (if this protein is present). Lysylation is critical for the stimulatory effect of EF-P on peptide-bond formation. The lysylation moiety may extend toward the peptidyltransferase center and stabilize the terminal 3-CCA end of the tRNA. Hydroxylation of the C5 position on Lys-34 may allow additional potential stabilizing hydrogen-bond interactions with the P-tRNA.

The protein resides in the cytoplasm. It participates in protein biosynthesis; polypeptide chain elongation. Involved in peptide bond synthesis. Alleviates ribosome stalling that occurs when 3 or more consecutive Pro residues or the sequence PPG is present in a protein, possibly by augmenting the peptidyl transferase activity of the ribosome. Modification of Lys-34 is required for alleviation. In Actinobacillus pleuropneumoniae serotype 5b (strain L20), this protein is Elongation factor P.